A 950-amino-acid polypeptide reads, in one-letter code: Coiled-coil domain-containing protein 80 (950 aa).

The first 21 residues, 1–21 (MTWRMGPRFTMLLAMWLVCGS), serve as a signal peptide directing secretion. Disordered stretches follow at residues 28-64 (TIRG…IERS), 88-119 (PTEP…EMIR), and 289-609 (QVVA…QSPK). Composition is skewed to basic and acidic residues over residues 104–119 (PEQR…EMIR) and 308–317 (SEKKKEDPRR). Residues 348-374 (PRATTLPPAPATTVTRSTSRAVTVAAR) are compositionally biased toward low complexity. Over residues 376–385 (MTTTAFPTTQ) the composition is skewed to polar residues. The segment covering 418–428 (SRKDQHRERPQ) has biased composition (basic and acidic residues). Over residues 435-454 (KATSLESFTNAPPTTISEPS) the composition is skewed to polar residues. Basic and acidic residues-rich tracts occupy residues 462-478 (RFRD…HRDP), 487-499 (PAKE…KAQD), and 538-582 (KKHE…EKEK). Glycyl lysine isopeptide (Lys-Gly) (interchain with G-Cter in SUMO2) cross-links involve residues lysine 545 and lysine 548. Positions 560-587 (DKLLKSEKQMKKSEKKSKQEKEKSKKKK) form a coiled coil. Over residues 598 to 609 (KPTNKHFTQSPK) the composition is skewed to polar residues.

Belongs to the CCDC80 family. As to quaternary structure, binds to various extracellular matrix proteins. Post-translationally, phosphorylated. Expressed in dermal papilla and dermal fibroblasts (at protein level). Expressed in heart, thymus, placenta, pancreas, colon, epithelium, spleen and osteoblasts.

It is found in the secreted. Its subcellular location is the extracellular space. The protein localises to the extracellular matrix. Promotes cell adhesion and matrix assembly. This chain is Coiled-coil domain-containing protein 80 (CCDC80), found in Homo sapiens (Human).